The primary structure comprises 369 residues: Chorismate synthase (369 aa).

2 residues coordinate NADP(+): Arg-48 and Arg-54. Residues 125–127, 238–239, Gly-278, 293–297, and Arg-319 each bind FMN; these read RSS, NA, and KPTSS.

Belongs to the chorismate synthase family. In terms of assembly, homotetramer. Requires FMNH2 as cofactor.

The catalysed reaction is 5-O-(1-carboxyvinyl)-3-phosphoshikimate = chorismate + phosphate. It participates in metabolic intermediate biosynthesis; chorismate biosynthesis; chorismate from D-erythrose 4-phosphate and phosphoenolpyruvate: step 7/7. In terms of biological role, catalyzes the anti-1,4-elimination of the C-3 phosphate and the C-6 proR hydrogen from 5-enolpyruvylshikimate-3-phosphate (EPSP) to yield chorismate, which is the branch point compound that serves as the starting substrate for the three terminal pathways of aromatic amino acid biosynthesis. This reaction introduces a second double bond into the aromatic ring system. In Nitrosococcus oceani (strain ATCC 19707 / BCRC 17464 / JCM 30415 / NCIMB 11848 / C-107), this protein is Chorismate synthase.